A 290-amino-acid chain; its full sequence is 4-hydroxybenzoate octaprenyltransferase (290 aa).

Transmembrane regions (helical) follow at residues 23-43 (IGAL…TPGM), 46-66 (LWIL…GCVV), 99-119 (LFVV…AMTI), 141-161 (LPQV…FAAV), 163-183 (ESLP…AVAY), 212-232 (TLII…IGWL), 233-253 (NGLG…FVYQ), and 268-288 (AFMN…MSYW).

Belongs to the UbiA prenyltransferase family. Mg(2+) is required as a cofactor.

The protein resides in the cell inner membrane. It carries out the reaction all-trans-octaprenyl diphosphate + 4-hydroxybenzoate = 4-hydroxy-3-(all-trans-octaprenyl)benzoate + diphosphate. Its pathway is cofactor biosynthesis; ubiquinone biosynthesis. In terms of biological role, catalyzes the prenylation of para-hydroxybenzoate (PHB) with an all-trans polyprenyl group. Mediates the second step in the final reaction sequence of ubiquinone-8 (UQ-8) biosynthesis, which is the condensation of the polyisoprenoid side chain with PHB, generating the first membrane-bound Q intermediate 3-octaprenyl-4-hydroxybenzoate. This is 4-hydroxybenzoate octaprenyltransferase from Salmonella typhi.